The following is a 366-amino-acid chain: Chorismate synthase (366 aa).

The NADP(+) site is built by R48 and R54. Residues 131 to 133 (RAS), 243 to 244 (NA), G288, 303 to 307 (KPTPS), and R329 each bind FMN.

The protein belongs to the chorismate synthase family. In terms of assembly, homotetramer. FMNH2 is required as a cofactor.

The catalysed reaction is 5-O-(1-carboxyvinyl)-3-phosphoshikimate = chorismate + phosphate. It functions in the pathway metabolic intermediate biosynthesis; chorismate biosynthesis; chorismate from D-erythrose 4-phosphate and phosphoenolpyruvate: step 7/7. Catalyzes the anti-1,4-elimination of the C-3 phosphate and the C-6 proR hydrogen from 5-enolpyruvylshikimate-3-phosphate (EPSP) to yield chorismate, which is the branch point compound that serves as the starting substrate for the three terminal pathways of aromatic amino acid biosynthesis. This reaction introduces a second double bond into the aromatic ring system. The chain is Chorismate synthase from Bartonella quintana (strain Toulouse) (Rochalimaea quintana).